A 97-amino-acid polypeptide reads, in one-letter code: MGLLTCMFSSNSKESSSVRIKDSSISHPHTGQHISIRTFRELKAQQMSNPTWKKTETCLIMEFSRSMEDRLEEVANLPTTHMPRQSIQGPKLRPSIY.

Disordered stretches follow at residues 1-31 and 75-97; these read MGLL…PHTG and ANLP…PSIY. Gly2 carries the N-myristoyl glycine; by host lipid modification. Polar residues predominate over residues 77–88; the sequence is LPTTHMPRQSIQ.

Belongs to the geminiviridae protein AC4/C4 family.

The protein localises to the host cell membrane. Pathogenicity determinant. May act as a suppressor of RNA-mediated gene silencing, also known as post-transcriptional gene silencing (PTGS), a mechanism of plant viral defense that limits the accumulation of viral RNAs. The protein is Protein C4 of Tomato yellow leaf curl China virus (TYLCCNV).